Reading from the N-terminus, the 308-residue chain is Probable manganese-dependent inorganic pyrophosphatase (308 aa).

The Mn(2+) site is built by histidine 9, aspartate 13, aspartate 15, aspartate 75, histidine 97, and aspartate 149.

It belongs to the PPase class C family. Mn(2+) is required as a cofactor.

It is found in the cytoplasm. The catalysed reaction is diphosphate + H2O = 2 phosphate + H(+). The sequence is that of Probable manganese-dependent inorganic pyrophosphatase from Staphylococcus carnosus (strain TM300).